A 201-amino-acid chain; its full sequence is IMP cyclohydrolase (201 aa).

This sequence belongs to the archaeal IMP cyclohydrolase family.

The enzyme catalyses IMP + H2O = 5-formamido-1-(5-phospho-D-ribosyl)imidazole-4-carboxamide. It participates in purine metabolism; IMP biosynthesis via de novo pathway; IMP from 5-formamido-1-(5-phospho-D-ribosyl)imidazole-4-carboxamide: step 1/1. Functionally, catalyzes the cyclization of 5-formylamidoimidazole-4-carboxamide ribonucleotide to IMP. This Methanococcus maripaludis (strain C7 / ATCC BAA-1331) protein is IMP cyclohydrolase.